We begin with the raw amino-acid sequence, 439 residues long: Proline--tRNA ligase (439 aa).

Belongs to the class-II aminoacyl-tRNA synthetase family. ProS type 2 subfamily. Homodimer.

It is found in the cytoplasm. The enzyme catalyses tRNA(Pro) + L-proline + ATP = L-prolyl-tRNA(Pro) + AMP + diphosphate. Catalyzes the attachment of proline to tRNA(Pro) in a two-step reaction: proline is first activated by ATP to form Pro-AMP and then transferred to the acceptor end of tRNA(Pro). This chain is Proline--tRNA ligase, found in Rhodopseudomonas palustris (strain HaA2).